The following is a 596-amino-acid chain: Proteasome-associated ATPase (596 aa).

Positions 12-94 (SRWERETQDL…KEEIDRLAQP (83 aa)) form a coiled coil. 280–285 (GCGKTL) provides a ligand contact to ATP. The docks into pockets in the proteasome alpha-ring stretch occupies residues 595–596 (YL).

This sequence belongs to the AAA ATPase family. As to quaternary structure, homohexamer. Assembles into a hexameric ring structure that caps the 20S proteasome core. Strongly interacts with the prokaryotic ubiquitin-like protein Pup through a hydrophobic interface; the interacting region of ARC lies in its N-terminal coiled-coil domain. There is one Pup binding site per ARC hexamer ring. Upon ATP-binding, the C-terminus of ARC interacts with the alpha-rings of the proteasome core, possibly by binding to the intersubunit pockets.

The protein operates within protein degradation; proteasomal Pup-dependent pathway. ATPase which is responsible for recognizing, binding, unfolding and translocation of pupylated proteins into the bacterial 20S proteasome core particle. May be essential for opening the gate of the 20S proteasome via an interaction with its C-terminus, thereby allowing substrate entry and access to the site of proteolysis. Thus, the C-termini of the proteasomal ATPase may function like a 'key in a lock' to induce gate opening and therefore regulate proteolysis. This is Proteasome-associated ATPase from Stackebrandtia nassauensis (strain DSM 44728 / CIP 108903 / NRRL B-16338 / NBRC 102104 / LLR-40K-21).